The following is a 638-amino-acid chain: Gamma-aminobutyric acid receptor subunit theta (638 aa).

The signal sequence occupies residues 1-21 (MGIRGMLRAAALLLLIRTWLA). Residues 22–267 (ESNGPSPTPK…FQVQREVRSY (246 aa)) lie on the Extracellular side of the membrane. An N-linked (GlcNAc...) asparagine glycan is attached at Asn-127. An intrachain disulfide couples Cys-183 to Cys-197. The chain crosses the membrane as a helical span at residues 268–288 (LVQVYWPTVLTTILSWISFWM). Topologically, residues 289 to 296 (NYDSSAAR) are cytoplasmic. Residues 297–314 (VTIGLTSILVLTTIDSHM) form a helical membrane-spanning segment. At 315-325 (RDKLPHISCIK) the chain is on the extracellular side. A helical transmembrane segment spans residues 326-346 (AIDIYILVCLFFVFLSLLEYV). At 347-617 (YINYLFFSQV…NRVPKVDRWS (271 aa)) the chain is on the cytoplasmic side. The interval 491–515 (ACDDEDSEESLSSEESHGHGSSHTG) is disordered. Over residues 492–502 (CDDEDSEESLS) the composition is skewed to acidic residues. Residues 618–638 (RFLFPLSFGLFNVVYWLYHVY) traverse the membrane as a helical segment.

Belongs to the ligand-gated ion channel (TC 1.A.9) family. Gamma-aminobutyric acid receptor (TC 1.A.9.5) subfamily. GABRQ sub-subfamily. Heteropentamer, formed by a combination of alpha (GABRA1-6), beta (GABRB1-3), gamma (GABRG1-3), delta (GABRD), epsilon (GABRE), rho (GABRR1-3), pi (GABRP) and theta (GABRQ) chains, each subunit exhibiting distinct physiological and pharmacological properties. Expressed in brain, lung, and spleen.

The protein resides in the postsynaptic cell membrane. It is found in the cell membrane. It catalyses the reaction chloride(in) = chloride(out). Its activity is regulated as follows. Potentiated by etomidate, propofol, pregnanolone and pentobarbital. Its function is as follows. Theta subunit of the heteropentameric ligand-gated chloride channel gated by gamma-aminobutyric acid (GABA), a major inhibitory neurotransmitter in the brain. GABA-gated chloride channels, also named GABA(A) receptors (GABAAR), consist of five subunits arranged around a central pore and contain GABA active binding site(s) located at the alpha and beta subunit interfaces. When activated by GABA, GABAARs selectively allow the flow of chloride anions across the cell membrane down their electrochemical gradient. The chain is Gamma-aminobutyric acid receptor subunit theta from Mus musculus (Mouse).